Here is a 365-residue protein sequence, read N- to C-terminus: Cobalt-precorrin-5B C(1)-methyltransferase (365 aa).

The protein belongs to the CbiD family.

The catalysed reaction is Co-precorrin-5B + S-adenosyl-L-methionine = Co-precorrin-6A + S-adenosyl-L-homocysteine. Its pathway is cofactor biosynthesis; adenosylcobalamin biosynthesis; cob(II)yrinate a,c-diamide from sirohydrochlorin (anaerobic route): step 6/10. Its function is as follows. Catalyzes the methylation of C-1 in cobalt-precorrin-5B to form cobalt-precorrin-6A. This Methanococcus maripaludis (strain C5 / ATCC BAA-1333) protein is Cobalt-precorrin-5B C(1)-methyltransferase.